The following is a 363-amino-acid chain: UDP-N-acetylenolpyruvoylglucosamine reductase (363 aa).

The region spanning 25-201 (IGPVARRMLT…RSAPVRYREL (177 aa)) is the FAD-binding PCMH-type domain. R168 is a catalytic residue. S249 functions as the Proton donor in the catalytic mechanism. E352 is an active-site residue.

The protein belongs to the MurB family. Requires FAD as cofactor.

It localises to the cytoplasm. It carries out the reaction UDP-N-acetyl-alpha-D-muramate + NADP(+) = UDP-N-acetyl-3-O-(1-carboxyvinyl)-alpha-D-glucosamine + NADPH + H(+). The protein operates within cell wall biogenesis; peptidoglycan biosynthesis. Its function is as follows. Cell wall formation. The polypeptide is UDP-N-acetylenolpyruvoylglucosamine reductase (Mycolicibacterium smegmatis (strain ATCC 700084 / mc(2)155) (Mycobacterium smegmatis)).